A 214-amino-acid polypeptide reads, in one-letter code: Probable transaldolase (214 aa).

Catalysis depends on Lys-83, which acts as the Schiff-base intermediate with substrate.

It belongs to the transaldolase family. Type 3B subfamily.

The protein localises to the cytoplasm. The catalysed reaction is D-sedoheptulose 7-phosphate + D-glyceraldehyde 3-phosphate = D-erythrose 4-phosphate + beta-D-fructose 6-phosphate. The protein operates within carbohydrate degradation; pentose phosphate pathway; D-glyceraldehyde 3-phosphate and beta-D-fructose 6-phosphate from D-ribose 5-phosphate and D-xylulose 5-phosphate (non-oxidative stage): step 2/3. Functionally, transaldolase is important for the balance of metabolites in the pentose-phosphate pathway. The polypeptide is Probable transaldolase (Clostridium tetani (strain Massachusetts / E88)).